Reading from the N-terminus, the 635-residue chain is Extracellular metalloproteinase MEP (635 aa).

An N-terminal signal peptide occupies residues 1 to 19 (MRAFLLASLASLPAVNVYA). A propeptide spanning residues 20-244 (HPTHNSRGLT…VHAVVDYAAE (225 aa)) is cleaved from the precursor. N-linked (GlcNAc...) asparagine glycans are attached at residues Asn287, Asn302, and Asn336. His429 is a binding site for Zn(2+). Glu430 is an active-site residue. His433 contacts Zn(2+).

Belongs to the peptidase M36 family. The cofactor is Zn(2+).

It is found in the secreted. Secreted metalloproteinase that allows assimilation of proteinaceous substrates. The polypeptide is Extracellular metalloproteinase MEP (MEP) (Leptosphaeria maculans (strain JN3 / isolate v23.1.3 / race Av1-4-5-6-7-8) (Blackleg fungus)).